A 165-amino-acid polypeptide reads, in one-letter code: NADH-quinone oxidoreductase subunit I (165 aa).

2 consecutive 4Fe-4S ferredoxin-type domains span residues 57–86 (RRYENGEERCIACKLCEAVCPALAITIESD) and 96–125 (SRYDIDLTKCIFCGFCEESCPVDSIVETHI). Positions 66, 69, 72, 76, 105, 108, 111, and 115 each coordinate [4Fe-4S] cluster.

This sequence belongs to the complex I 23 kDa subunit family. NDH-1 is composed of 14 different subunits. Subunits NuoA, H, J, K, L, M, N constitute the membrane sector of the complex. It depends on [4Fe-4S] cluster as a cofactor.

Its subcellular location is the cell inner membrane. It catalyses the reaction a quinone + NADH + 5 H(+)(in) = a quinol + NAD(+) + 4 H(+)(out). In terms of biological role, NDH-1 shuttles electrons from NADH, via FMN and iron-sulfur (Fe-S) centers, to quinones in the respiratory chain. The immediate electron acceptor for the enzyme in this species is believed to be ubiquinone. Couples the redox reaction to proton translocation (for every two electrons transferred, four hydrogen ions are translocated across the cytoplasmic membrane), and thus conserves the redox energy in a proton gradient. This chain is NADH-quinone oxidoreductase subunit I, found in Polaromonas naphthalenivorans (strain CJ2).